A 157-amino-acid polypeptide reads, in one-letter code: Large ribosomal subunit protein uL15 (157 aa).

This sequence belongs to the universal ribosomal protein uL15 family. Part of the 50S ribosomal subunit.

In terms of biological role, binds to the 23S rRNA. The polypeptide is Large ribosomal subunit protein uL15 (Ehrlichia ruminantium (strain Gardel)).